The following is a 187-amino-acid chain: Ribose 1,5-bisphosphate phosphokinase PhnN (187 aa).

9–16 (GPSGSGKD) contacts ATP.

This sequence belongs to the ribose 1,5-bisphosphokinase family.

It catalyses the reaction alpha-D-ribose 1,5-bisphosphate + ATP = 5-phospho-alpha-D-ribose 1-diphosphate + ADP. It functions in the pathway metabolic intermediate biosynthesis; 5-phospho-alpha-D-ribose 1-diphosphate biosynthesis; 5-phospho-alpha-D-ribose 1-diphosphate from D-ribose 5-phosphate (route II): step 3/3. Functionally, catalyzes the phosphorylation of ribose 1,5-bisphosphate to 5-phospho-D-ribosyl alpha-1-diphosphate (PRPP). The chain is Ribose 1,5-bisphosphate phosphokinase PhnN from Desulfomicrobium baculatum (strain DSM 4028 / VKM B-1378 / X) (Desulfovibrio baculatus).